Reading from the N-terminus, the 356-residue chain is NF-kappa-B inhibitor beta (356 aa).

A phosphoserine; by RPS6KA1 mark is found at Ser-19 and Ser-23. ANK repeat units follow at residues 57–86 (DGDT…GTEY), 93–122 (LGQT…GLCV), and 126–155 (RGHT…RRPR). The interval 149–193 (PRPRRPREAPDTYLAQGPDRTPDTNHTPVALYPDSDLEKEEEESE) is disordered. Position 183 is a phosphoserine (Ser-183). A compositionally biased stretch (acidic residues) spans 183 to 193 (SDLEKEEEESE). 3 ANK repeats span residues 206–235 (EGHT…DLDK), 240–269 (CGRS…NPAA), and 273–302 (GGRT…PEPE). The interval 298 to 356 (APEPEGEDEKSGPCSSSSDSDSGDEGDEYDDIVVHSSRSQTRLPPTPASKPLPDDPRPV) is disordered. Phosphoserine; by CK2 occurs at positions 313 and 315. A compositionally biased stretch (acidic residues) spans 318-328 (DSGDEGDEYDD).

This sequence belongs to the NF-kappa-B inhibitor family. Interacts with THRB (via ligand-binding domain). Interacts with RELA and REL. Interacts with COMMD1. Interacts with inhibitor kappa B-interacting Ras-like NKIRAS1 and NKIRAS2. In terms of processing, phosphorylated by RPS6KA1; followed by degradation. Interaction with NKIRAS1 and NKIRAS2 probably prevents phosphorylation. Expressed in all tissues examined.

Its subcellular location is the cytoplasm. The protein localises to the nucleus. Functionally, inhibits NF-kappa-B by complexing with and trapping it in the cytoplasm. However, the unphosphorylated form resynthesized after cell stimulation is able to bind NF-kappa-B allowing its transport to the nucleus and protecting it to further NFKBIA-dependent inactivation. Association with inhibitor kappa B-interacting NKIRAS1 and NKIRAS2 prevent its phosphorylation rendering it more resistant to degradation, explaining its slower degradation. This Homo sapiens (Human) protein is NF-kappa-B inhibitor beta (NFKBIB).